A 309-amino-acid polypeptide reads, in one-letter code: Ornithine carbamoyltransferase (309 aa).

Carbamoyl phosphate-binding positions include 51 to 54 (STRT), Gln78, Arg102, and 129 to 132 (HPVQ). L-ornithine contacts are provided by residues Asn159, Asp223, and 227 to 228 (SM). Residues 263 to 264 (CL) and Arg291 contribute to the carbamoyl phosphate site.

This sequence belongs to the aspartate/ornithine carbamoyltransferase superfamily. OTCase family.

The protein resides in the cytoplasm. The enzyme catalyses carbamoyl phosphate + L-ornithine = L-citrulline + phosphate + H(+). It participates in amino-acid biosynthesis; L-arginine biosynthesis; L-arginine from L-ornithine and carbamoyl phosphate: step 1/3. Reversibly catalyzes the transfer of the carbamoyl group from carbamoyl phosphate (CP) to the N(epsilon) atom of ornithine (ORN) to produce L-citrulline. The chain is Ornithine carbamoyltransferase from Nitratiruptor sp. (strain SB155-2).